A 384-amino-acid polypeptide reads, in one-letter code: Calreticulin-3 (384 aa).

The N-terminal stretch at 1 to 19 (MARALVQLWAICMLRVALA) is a signal peptide. The tract at residues 20-197 (TVYFQEEFLD…GQSIESGSIE (178 aa)) is N-domain. Asn-42 carries N-linked (GlcNAc...) asparagine glycosylation. An intrachain disulfide couples Cys-105 to Cys-137. Residues Tyr-109, Lys-111, Tyr-128, and Asp-135 each coordinate an alpha-D-glucoside. Tandem repeats lie at residues 191 to 202 (IESGSIEYDWNL), 208 to 219 (ETSPAESKDWEQ), 221 to 230 (KDNKAQDWEK), 234 to 245 (DASTSKQSDWNG), 249 to 259 (GDWPAPMLQKP), 263 to 271 (DGLKPEGIH), and 273 to 283 (DVWLHRKMKNT). Residues 191–245 (IESGSIEYDWNLTSLKKETSPAESKDWEQTKDNKAQDWEKHFLDASTSKQSDWNG) form a 4 X approximate repeats region. The P-domain stretch occupies residues 198–294 (YDWNLTSLKK…YLTQYDLSEF (97 aa)). Asn-201 is a glycosylation site (N-linked (GlcNAc...) asparagine). Residues 249–283 (GDWPAPMLQKPPYQDGLKPEGIHKDVWLHRKMKNT) form a 3 X approximate repeats region. The interval 295-384 (ENIGAIGLEL…FNQFHRRNEL (90 aa)) is C-domain. Glu-303 provides a ligand contact to an alpha-D-glucoside. A Prevents secretion from ER motif is present at residues 381 to 384 (RNEL).

The protein belongs to the calreticulin family. In terms of assembly, component of an EIF2 complex at least composed of CELF1/CUGBP1, CALR, CALR3, EIF2S1, EIF2S2, HSP90B1 and HSPA5. In terms of tissue distribution, testis specific.

Its subcellular location is the endoplasmic reticulum lumen. During spermatogenesis, may act as a lectin-independent chaperone for specific client proteins such as ADAM3. Required for sperm fertility. CALR3 capacity for calcium-binding may be absent or much lower than that of CALR. This Homo sapiens (Human) protein is Calreticulin-3 (CALR3).